The following is a 252-amino-acid chain: Body wall muscle protein HR-29 (252 aa).

An N-acetylserine modification is found at Ser2. 3 tandem repeats follow at residues Arg37–Ser55, Gln56–Ser74, and Gln75–Ser93. Residues Arg37–Ser93 form a 3 X 19 AA approximate tandem repeats region. The sHSP domain occupies Ile138–Glu249.

Belongs to the small heat shock protein (HSP20) family. Exists as an oligomer.

The protein localises to the membrane. In terms of biological role, may be a component of myofibrils where it acts as a stabilizer. The polypeptide is Body wall muscle protein HR-29 (Halocynthia roretzi (Sea squirt)).